The chain runs to 239 residues: EF-hand domain-containing protein D1 (239 aa).

Basic and acidic residues predominate over residues Met-1–Glu-18. Positions Met-1–Ala-53 are disordered. EF-hand domains are found at residues Arg-90 to Pro-125 and Gln-126 to Gly-161. Residues Asp-103, Asp-107, Glu-114, Asp-139, Asp-141, Asp-143, Lys-145, and Glu-150 each coordinate Ca(2+). Ser-201 is modified (phosphoserine).

Its subcellular location is the mitochondrion inner membrane. In terms of biological role, acts as a calcium sensor for mitochondrial flash (mitoflash) activation, an event characterized by stochastic bursts of superoxide production. May play a role in neuronal differentiation. This chain is EF-hand domain-containing protein D1 (EFHD1), found in Homo sapiens (Human).